The sequence spans 95 residues: Aspartyl/glutamyl-tRNA(Asn/Gln) amidotransferase subunit C (95 aa).

This sequence belongs to the GatC family. In terms of assembly, heterotrimer of A, B and C subunits.

The enzyme catalyses L-glutamyl-tRNA(Gln) + L-glutamine + ATP + H2O = L-glutaminyl-tRNA(Gln) + L-glutamate + ADP + phosphate + H(+). It catalyses the reaction L-aspartyl-tRNA(Asn) + L-glutamine + ATP + H2O = L-asparaginyl-tRNA(Asn) + L-glutamate + ADP + phosphate + 2 H(+). Its function is as follows. Allows the formation of correctly charged Asn-tRNA(Asn) or Gln-tRNA(Gln) through the transamidation of misacylated Asp-tRNA(Asn) or Glu-tRNA(Gln) in organisms which lack either or both of asparaginyl-tRNA or glutaminyl-tRNA synthetases. The reaction takes place in the presence of glutamine and ATP through an activated phospho-Asp-tRNA(Asn) or phospho-Glu-tRNA(Gln). This chain is Aspartyl/glutamyl-tRNA(Asn/Gln) amidotransferase subunit C, found in Nitratidesulfovibrio vulgaris (strain DSM 19637 / Miyazaki F) (Desulfovibrio vulgaris).